Reading from the N-terminus, the 389-residue chain is MAMVVSAWRDPQEELAAVDDQSAAGREHLQHRHSPKSAEEKAQIAAQNQQHVECVVCGDKSSGKHYGQFTCEGCKSFFKRSVRRNLSYTCRANRNCPVDQHHRNQCQYCRLKKCLKVGMRREAVQRGRMPPNQPNPSHYALTNGDHLNGQCYLSGYISLLLRAEPYPASRYGNQCMQSGNIMGIENICELAARLLFSAVEWARNIPFFPDLQITDQVSLLRLTWSELFVLNAAQSSMPLHVAPLLAAAGLHASPMSADRVVAFMDHIRFFQEQVEKLKALQVDSAEYSCAKAIVLFTSDACGLSDIPHIEGLQEKSQCALEEYVRSQYPNQPTRFGKLLLRLPALRMVSSSVIEQLFFVRLVGKTPIETLIRDMLLSGSSFNWPYMPIQ.

The disordered stretch occupies residues 19-39 (DDQSAAGREHLQHRHSPKSAE). A DNA-binding region (nuclear receptor) is located at residues 51-126 (HVECVVCGDK…VGMRREAVQR (76 aa)). NR C4-type zinc fingers lie at residues 54–74 (CVVCGDKSSGKHYGQFTCEGC) and 90–109 (CRANRNCPVDQHHRNQCQYC). The region spanning 152 to 378 (YLSGYISLLL…TLIRDMLLSG (227 aa)) is the NR LBD domain.

This sequence belongs to the nuclear hormone receptor family. NR2 subfamily. In terms of tissue distribution, expressed the retina, where expression is restricted to the outer nuclear layer.

It is found in the nucleus. Functionally, putative transcription factor that is required in photoreceptor cells precursors during eye development. This chain is Nuclear receptor subfamily 2 group F member 1-B, found in Danio rerio (Zebrafish).